The following is a 118-amino-acid chain: Small ribosomal subunit protein uS13 (118 aa).

The interval 94-118 is disordered; it reads SLPVRGQRTKTNARTRKGPRRPIKR.

It belongs to the universal ribosomal protein uS13 family. In terms of assembly, part of the 30S ribosomal subunit. Forms a loose heterodimer with protein S19. Forms two bridges to the 50S subunit in the 70S ribosome.

Functionally, located at the top of the head of the 30S subunit, it contacts several helices of the 16S rRNA. In the 70S ribosome it contacts the 23S rRNA (bridge B1a) and protein L5 of the 50S subunit (bridge B1b), connecting the 2 subunits; these bridges are implicated in subunit movement. Contacts the tRNAs in the A and P-sites. The sequence is that of Small ribosomal subunit protein uS13 from Dichelobacter nodosus (strain VCS1703A).